The sequence spans 383 residues: Methenyltetrahydrofolate synthase domain-containing protein (383 aa).

Residues 249-301 form a disordered region; sequence AGKDVTLQGEHQHLPEPGCQQTVPLSVGRRPPDTPGPETNSMEAAPGSPPGEG. The RRM domain occupies 306 to 379; the sequence is ADVYVGNLPG…DTLRVALARQ (74 aa).

The chain is Methenyltetrahydrofolate synthase domain-containing protein (MTHFSD) from Homo sapiens (Human).